A 320-amino-acid chain; its full sequence is Aspartate carbamoyltransferase catalytic subunit (320 aa).

2 residues coordinate carbamoyl phosphate: Arg68 and Thr69. Lys96 is a binding site for L-aspartate. 3 residues coordinate carbamoyl phosphate: Arg118, His148, and Gln151. 2 residues coordinate L-aspartate: Arg181 and Arg236. Residues Gly277 and Pro278 each contribute to the carbamoyl phosphate site.

Belongs to the aspartate/ornithine carbamoyltransferase superfamily. ATCase family. As to quaternary structure, heterododecamer (2C3:3R2) of six catalytic PyrB chains organized as two trimers (C3), and six regulatory PyrI chains organized as three dimers (R2).

The enzyme catalyses carbamoyl phosphate + L-aspartate = N-carbamoyl-L-aspartate + phosphate + H(+). It participates in pyrimidine metabolism; UMP biosynthesis via de novo pathway; (S)-dihydroorotate from bicarbonate: step 2/3. Catalyzes the condensation of carbamoyl phosphate and aspartate to form carbamoyl aspartate and inorganic phosphate, the committed step in the de novo pyrimidine nucleotide biosynthesis pathway. The protein is Aspartate carbamoyltransferase catalytic subunit of Paracidovorax citrulli (strain AAC00-1) (Acidovorax citrulli).